A 179-amino-acid chain; its full sequence is MEGEELIYHNIINEILVGYIKYYMNDISEHELSPYQQQIKKILTYYDDCLNKQVTITFSLTSAQEIKTQFTEVVTELFKDLINWGRICGFIVFSARMAKYCKDANNHLESTVITTAYNFMKHNLLPWMISHGGQEEFLAFSLHSDIYSVIFNIKYFLSKFCNHMFLKSCVHLLRNCNLI.

The BH1 signature appears at 76-95; it reads ELFKDLINWGRICGFIVFSA. Residues 126–141 carry the BH2 motif; that stretch reads PWMISHGGQEEFLAFS.

Belongs to the Bcl-2 family. In terms of assembly, interacts with host BECN1 (via BH3 homology domain); this interaction allows the virus to inhibit BECN1, and thus autophagy. Interacts with host BID. Interacts with host BAX.

Its subcellular location is the host mitochondrion. It localises to the host endoplasmic reticulum. Suppresses apoptosis in host cell to promote the viral replication. Has the ability to potentially bind to all the members of the proapoptotic Bcl-2 family. Inhibits autophagy by interacting with host Beclin 1 (BECN1). The polypeptide is Apoptosis regulator Bcl-2 homolog (African swine fever virus (isolate Pig/Kenya/KEN-50/1950) (ASFV)).